The following is an 89-amino-acid chain: Small ribosomal subunit protein uS15 (89 aa).

Belongs to the universal ribosomal protein uS15 family. Part of the 30S ribosomal subunit. Forms a bridge to the 50S subunit in the 70S ribosome, contacting the 23S rRNA.

Its function is as follows. One of the primary rRNA binding proteins, it binds directly to 16S rRNA where it helps nucleate assembly of the platform of the 30S subunit by binding and bridging several RNA helices of the 16S rRNA. Functionally, forms an intersubunit bridge (bridge B4) with the 23S rRNA of the 50S subunit in the ribosome. The protein is Small ribosomal subunit protein uS15 of Shewanella amazonensis (strain ATCC BAA-1098 / SB2B).